We begin with the raw amino-acid sequence, 437 residues long: Phosphoglucosamine mutase (437 aa).

The Phosphoserine intermediate role is filled by Ser93. Residues Ser93, Asp230, Asp232, and Asp234 each contribute to the Mg(2+) site. Ser93 carries the phosphoserine modification.

It belongs to the phosphohexose mutase family. Mg(2+) is required as a cofactor. Activated by phosphorylation.

The enzyme catalyses alpha-D-glucosamine 1-phosphate = D-glucosamine 6-phosphate. Catalyzes the conversion of glucosamine-6-phosphate to glucosamine-1-phosphate. The polypeptide is Phosphoglucosamine mutase (Clavibacter michiganensis subsp. michiganensis (strain NCPPB 382)).